A 335-amino-acid chain; its full sequence is MRN complex-interacting protein (335 aa).

Disordered stretches follow at residues 75 to 102 (EEAV…PSKP) and 118 to 194 (QELD…ALST). Position 100 is a phosphoserine (S100). Residues 129–142 (TQLSTSAERPSSPA) show a composition bias toward polar residues. Positions 145 to 148 (RKRK) match the Nuclear localization signal (NLS) motif. Positions 177–194 (STGLFGTEQQGTSPALST) are enriched in polar residues. The tract at residues 203–230 (FPRWKLPSPVTQVNAPSSKWARFLLAPG) is necessary for the association with the MRN complex. The tract at residues 273–335 (RPPQAIHTTT…TTGEDFDDDL (63 aa)) is disordered. A compositionally biased stretch (basic and acidic residues) spans 286-297 (DRPDRKTREQPR).

This sequence belongs to the MRNIP family. As to quaternary structure, associates with the MRE11-RAD50-NBN (MRN) damage-sensing complex; this association is constitutive. Interacts with MRE11. Interacts with NBN. Interacts with RAD50. In terms of processing, phosphorylated; phosphorylation is constitutive and occurs in the absence of any DNA-damaging stimulus. Phosphorylation is necessary for its nuclear retention.

The protein localises to the nucleus. The protein resides in the nucleoplasm. Its function is as follows. Plays a role in the cellular response to DNA damage and the maintenance of genome stability through its association with the MRN damage-sensing complex. Promotes chromatin loading and activity of the MRN complex to facilitate subsequent ATM-mediated DNA damage response signaling and DNA repair. The chain is MRN complex-interacting protein from Mus musculus (Mouse).